Reading from the N-terminus, the 878-residue chain is Protein argonaute 6 (878 aa).

Residues 1–17 show a composition bias toward low complexity; sequence METSSSLPLSPISIEPE. The disordered stretch occupies residues 1–25; it reads METSSSLPLSPISIEPEQPSHRDYD. The PAZ domain maps to 259-372; sequence PVIEFLKANQ…LPLEFCNLVS (114 aa). One can recognise a Piwi domain in the interval 541–851; sequence FILCILPERK…AAAQVAQFTK (311 aa).

Belongs to the argonaute family. Ago subfamily. Expressed in roots, cotyledons and shoot meristematic region.

The protein resides in the nucleus. Its function is as follows. Involved in transcriptional gene silencing (TGS). Component of the RISC complex that associate with the small interfering RNA (siRNA) pathway involved in direct cytosine methylation at endogenous DNA repeats. Required for the accumulation of specific siRNAs derived from transgene and heterochromatin-related endogenous loci. Involved in RNA-directed DNA methylation (RdDM) at specific endogenous loci. Probably not required for the accumulation of siRNAs derived from transgene inverted repeats that induce post-transcriptional gene silencing (PTGS). Associates mainly with small RNAs of 24 nucleotide in length and preferentially recruits small RNAs with a 5' terminal adenosine. Targeted by turnip yellows virus (TuYV) protein P0 (via F-box-like domain) for probable proteasome degradation and thereby inactivating AGO6 function in RNA silencing. In Arabidopsis thaliana (Mouse-ear cress), this protein is Protein argonaute 6 (AGO6).